The primary structure comprises 49 residues: uncharacterized protein (49 aa).

A helical membrane pass occupies residues 16-36 (WTCHTGFYLMILLVLFFMYGF).

It localises to the cell membrane. This is an uncharacterized protein from Bacillus subtilis (strain 168).